Consider the following 270-residue polypeptide: Phosphate import ATP-binding protein PstB 2 (270 aa).

The region spanning 25–265 (LQAKDINIYY…PEKKQTEDYI (241 aa)) is the ABC transporter domain. 57 to 64 (GPSGCGKS) contacts ATP.

Belongs to the ABC transporter superfamily. Phosphate importer (TC 3.A.1.7) family. The complex is composed of two ATP-binding proteins (PstB), two transmembrane proteins (PstC and PstA) and a solute-binding protein (PstS).

It is found in the cell membrane. The enzyme catalyses phosphate(out) + ATP + H2O = ADP + 2 phosphate(in) + H(+). Part of the ABC transporter complex PstSACB involved in phosphate import. Responsible for energy coupling to the transport system. The chain is Phosphate import ATP-binding protein PstB 2 from Shouchella clausii (strain KSM-K16) (Alkalihalobacillus clausii).